The primary structure comprises 525 residues: Putative ankyrin repeat protein FPV228 (525 aa).

ANK repeat units follow at residues 39–71 (HPDN…TRDI), 72–122 (LGNT…ACNN), 123–152 (LNQT…KVNI), 156–185 (YGNT…DVNI), 190–226 (YWYS…TRCR), 227–254 (LNTT…DINA), 258–287 (NDNA…DVNM), 291–320 (RGKT…NPNI), and 324–353 (IMNT…DINH).

This Fowlpox virus (strain NVSL) (FPV) protein is Putative ankyrin repeat protein FPV228.